Here is a 361-residue protein sequence, read N- to C-terminus: Salt tolerance receptor-like cytoplasmic kinase 1 (361 aa).

3 S-palmitoyl cysteine lipidation sites follow: Cys5, Cys10, and Cys14. One can recognise a Protein kinase domain in the interval 67–347; sequence GFSSRVIGHG…RALQEKTSAL (281 aa). ATP-binding positions include 73-81 and Lys95; that span reads IGHGGFSTV. Asp195 acts as the Proton acceptor in catalysis.

This sequence belongs to the protein kinase superfamily. Ser/Thr protein kinase family. In terms of assembly, self-interacts. Interacts with CATA, CATB and CATC at the plasma membrane. In terms of processing, palmitoylated. Palmotylation at Cys-5, Cys-10 and Cys-14 by DHHC9 is required for plasma membrane targeting and STRK1 function. Autophosphorylated. As to expression, accumulates in seeds. Mainly expressed in young roots, and, to a lower extent, in leaf veins, seedlings, stems, leaf sheath and young spikelet.

The protein resides in the cell membrane. It catalyses the reaction L-seryl-[protein] + ATP = O-phospho-L-seryl-[protein] + ADP + H(+). The enzyme catalyses L-threonyl-[protein] + ATP = O-phospho-L-threonyl-[protein] + ADP + H(+). It carries out the reaction L-tyrosyl-[protein] + ATP = O-phospho-L-tyrosyl-[protein] + ADP + H(+). Acts probably as a dual specificity protein kinase. Regulates hydrogen peroxide (H(2)O(2)) homeostasis and improves salt tolerance by phosphorylating tyrosine residues of CATC thus activating its catalase activity. Promotes growth at the seedling stage and prevents grain yield loss under salt stress conditions. The chain is Salt tolerance receptor-like cytoplasmic kinase 1 from Oryza sativa subsp. japonica (Rice).